We begin with the raw amino-acid sequence, 213 residues long: uncharacterized protein (213 aa).

Gly53, Glu74, and Asp97 together coordinate S-adenosyl-L-methionine.

Belongs to the methyltransferase superfamily. YrrT family.

Could be a S-adenosyl-L-methionine-dependent methyltransferase. This is an uncharacterized protein from Geobacillus sp. (strain WCH70).